The chain runs to 705 residues: MTFPLPLDHEHLQKLVTADLVRPDHLLGAHPTTEHGVQGVRFAVWAPNAQHVSVVGDFNDWNGFDHPLQRLDFGFWGAFVPAAQPGQRYKFRVTGAGGQTVDKTDPYGTFFEVRPNNASIIWQQDFEWTDAGWLEQRARRGQALEDPISIYECHVGSWARRDDGWFLNYRDLAHRLGEYVTYMGYTHVELLGVMEHPFDGSWGYQVTGYYAPTSRLGSPEDFKYLVNHLHSLGIGVLLDWVPGHFPTDEFALAHFDGSPLYEYADPRKGYHYDWNTYIFDYGRNEVVMFLIGSALKWVQDYHVDGLRVDAVASMLYLDFSRTEWVPNIYGGRENLEAIAFLKRLNEVAHHMAPGCLMIAEESTSFPGVTTPTPEGLGFDYKWAMGWMNDSLAYFEQDPIYRKYDHHKLTFFNVYRTSENYVLAISHDEVVHLKKPMVLKHPGDWYAQRADYRAFLAMMWTTPGKKLLFMGQDFAQGSEWNHDAPLPWFHADQPDHRGVMNLVRRLNELYRERPDWHTGDAREEGMAWISADDTDNSVYAYARRDTYSGAWSLVIANLTPVYREDYVIGVPQGGEYRVLLSTDDGEFGGFGTQQPDLSARDEAAHGQAHALHLNLPPSSVLVLEPVAAAPVKGLVSRQELTPELREVARQSAQAVQVERAADPRPNEQQRLVAETPAHEGGRSAPADAAESAEQKPDDEQKGGKKA.

The active-site Nucleophile is D309. E360 functions as the Proton donor in the catalytic mechanism. The disordered stretch occupies residues 654-705 (VQVERAADPRPNEQQRLVAETPAHEGGRSAPADAAESAEQKPDDEQKGGKKA). Residues 691–705 (AEQKPDDEQKGGKKA) show a composition bias toward basic and acidic residues.

It belongs to the glycosyl hydrolase 13 family. GlgB subfamily. As to quaternary structure, monomer.

The catalysed reaction is Transfers a segment of a (1-&gt;4)-alpha-D-glucan chain to a primary hydroxy group in a similar glucan chain.. It functions in the pathway glycan biosynthesis; glycogen biosynthesis. Functionally, catalyzes the formation of the alpha-1,6-glucosidic linkages in glycogen by scission of a 1,4-alpha-linked oligosaccharide from growing alpha-1,4-glucan chains and the subsequent attachment of the oligosaccharide to the alpha-1,6 position. In Deinococcus radiodurans (strain ATCC 13939 / DSM 20539 / JCM 16871 / CCUG 27074 / LMG 4051 / NBRC 15346 / NCIMB 9279 / VKM B-1422 / R1), this protein is 1,4-alpha-glucan branching enzyme GlgB.